Here is a 441-residue protein sequence, read N- to C-terminus: Growth/differentiation factor 9 (441 aa).

Positions 1–29 (MALPSNFLLGVCCFAWLCFLSSLSSQAST) are cleaved as a signal peptide. The propeptide occupies 30–306 (EESQSGASEN…EVERSPRRRR (277 aa)). Asparagine 163, asparagine 229, asparagine 258, and asparagine 325 each carry an N-linked (GlcNAc...) asparagine glycan. 3 disulfides stabilise this stretch: cysteine 340–cysteine 406, cysteine 369–cysteine 438, and cysteine 373–cysteine 440.

This sequence belongs to the TGF-beta family. In terms of assembly, homodimer or heterodimer (Potential). But, in contrast to other members of this family, cannot be disulfide-linked. In terms of processing, phosphorylated; phosphorylation is critical for GDF9 function. In terms of tissue distribution, ovary. Strongly expressed in germinal vesicle (GV) stage oocytes, MII-stage oocytes and in zygotes.

It localises to the secreted. Functionally, required for ovarian folliculogenesis. In Mus musculus (Mouse), this protein is Growth/differentiation factor 9 (Gdf9).